A 1189-amino-acid polypeptide reads, in one-letter code: Pumilio homolog 1 (1189 aa).

5 disordered regions span residues 24 to 65 (QHAQ…SSPV), 233 to 288 (SCLR…QNGI), 491 to 525 (QQTTQQTQQGQQQVLRGGASQRPLTPNQNQQGQQT), 614 to 652 (AGTTNGPFRPLGTQQPQPQPQQQPTNNLASSSFYGNNSL), and 743 to 774 (GPVGMPLPSQGPGHSQTPPPSLSSHGSSSSLN). The segment covering 45-58 (QAQPQPAANQALAA) has biased composition (low complexity). Over residues 250-277 (NDKGDKKNKGTFDGDKLGDLKEEGDVMD) the composition is skewed to basic and acidic residues. The span at 491-503 (QQTTQQTQQGQQQ) shows a compositional bias: low complexity. Positions 512–525 (RPLTPNQNQQGQQT) are enriched in polar residues. Low complexity-rich tracts occupy residues 627-652 (QQPQPQPQQQPTNNLASSSFYGNNSL) and 764-774 (LSSHGSSSSLN). The 343-residue stretch at 829–1171 (GRSRLLEDFR…HILAKLEKYY (343 aa)) folds into the PUM-HD domain. Pumilio repeat units lie at residues 849 to 884 (EIAGHIMEFSQDQHGSRFIQLKLERATPAERQLVFN), 885 to 920 (EILQAAYQLMVDVFGNYVIQKFFEFGSLEQKLALAE), 921 to 958 (RIRGHVLSLALQMYGCRVIQKALEFIPPDQQVINEMVR), 959 to 994 (ELDGHVLKCVKDQNGNHVVQKCIECVQPQSLQFIID), 995 to 1030 (AFKGQVFALSTHPYGCRVIQRILEHCLPEQTLPILE), 1031 to 1066 (ELHQHTEQLVQDQYGNYVIQHVLEHGRPEDKSKIVA), 1067 to 1102 (EIRGNVLVLSQHKFASNVVEKCVTHASRTERAMLID), and 1106 to 1145 (TMNDGPHSALYTMMKDQYANYVVQKMIDVAEPAQRKIVMH). Residues 864 to 868 (SRFIQ) form an adenine-nucleotide binding in RNA target region. The uracil-nucleotide binding in RNA target stretch occupies residues 900–904 (NYVIQ). The tract at residues 936–940 (CRVIQ) is adenine-nucleotide binding in RNA target. The segment at 974 to 978 (NHVVQ) is non-specific-nucleotide binding in RNA target. Residues 1010 to 1014 (CRVIQ) form an adenine-nucleotide binding in RNA target region. A uracil-nucleotide binding in RNA target region spans residues 1046 to 1050 (NYVIQ). 2 guanine-nucleotide binding in RNA target regions span residues 1082–1086 (SNVVE) and 1083–1086 (NVVE). The uracil-nucleotide binding in RNA target stretch occupies residues 1125–1129 (NYVVQ).

As to expression, detected in embryonic male and female gonads, heart, liver and muscle. Detected in adult brain, testis, ovary, heart, lung, spleen, kidney and muscle.

It is found in the cytoplasm. The protein resides in the P-body. It localises to the cytoplasmic granule. Its function is as follows. Sequence-specific RNA-binding protein that acts as a post-transcriptional repressor by binding the 3'-UTR of mRNA targets. Binds to an RNA consensus sequence, the Pumilio Response Element (PRE), 5'-UGUANAUA-3', that is related to the Nanos Response Element (NRE). Mediates post-transcriptional repression of transcripts via different mechanisms: acts via direct recruitment of the CCR4-POP2-NOT deadenylase leading to translational inhibition and mRNA degradation. Also mediates deadenylation-independent repression by promoting accessibility of miRNAs. In Gallus gallus (Chicken), this protein is Pumilio homolog 1 (PUM1).